Here is a 472-residue protein sequence, read N- to C-terminus: L-fuculokinase (472 aa).

The protein belongs to the FGGY kinase family. The cofactor is a divalent metal cation.

The catalysed reaction is L-fuculose + ATP = L-fuculose 1-phosphate + ADP + H(+). It participates in carbohydrate degradation; L-fucose degradation; L-lactaldehyde and glycerone phosphate from L-fucose: step 2/3. Catalyzes the phosphorylation of L-fuculose. Can also phosphorylate, with lower efficiency, D-ribulose, D-xylulose and D-fructose. The sequence is that of L-fuculokinase from Escherichia coli (strain K12).